We begin with the raw amino-acid sequence, 1960 residues long: Nuclear pore complex protein Nup98-Nup96 (1960 aa).

46 tandem repeats follow at residues 2–3 (FG), 9–10 (FG), 18–19 (FG), 30–31 (FG), 35–36 (FG), 43–44 (FG), 59–60 (FG), 73–74 (FG), 81–82 (FG), 92–93 (FG), 105–106 (FG), 117–118 (FG), 125–126 (FG), 135–136 (FG), 148–149 (FG), 160–161 (FG), 163–164 (FG), 174–175 (FG), 264–265 (FG), 266–267 (FG), 282–283 (FG), 293–294 (FG), 304–305 (FG), 309–310 (FG), 319–320 (FG), 333–334 (FG), 352–353 (FG), 358–359 (FG), 365–366 (FG), 377–378 (FG), 384–385 (FG), 387–388 (FG), 400–401 (FG), 413–414 (FG), 426–427 (FG), 428–429 (FG), 441–442 (FG), 454–455 (FG), 467–468 (FG), 493–494 (FG), 496–497 (FG), 516–517 (FG), 527–528 (FG), 546–547 (FG), 553–554 (FG), and 565–566 (FG). Residues 2-566 (FGGAKPSFGA…GGSLGGGGFG (565 aa)) are 46 X 2 AA repeats of F-G. 2 disordered regions span residues 698–768 (KSVE…WLHP) and 781–860 (TGMD…AANQ). The segment covering 704 to 718 (NPSSSIGSAPNTPQS) has biased composition (polar residues). Residues 755-768 (ESQDNGRRESWLHP) show a composition bias toward basic and acidic residues. 2 stretches are compositionally biased toward polar residues: residues 781–794 (TGMD…STLN) and 806–850 (RPSS…SNRS). The 143-residue stretch at 886–1028 (RVGYYTIPSL…GSWVFRVKHF (143 aa)) folds into the Peptidase S59 domain. Serine 1029 (nucleophile) is an active-site residue.

Belongs to the nucleoporin GLFG family. In terms of assembly, part of the nuclear pore complex (NPC). Interacts with Rae1. Nuclear pore complex protein Nup98: Interacts with pzg and Chro. Interacts with MBD-R2; the interaction allows Nup98 recruitment to chromatin. Interacts with Trx. Interacts with Wds. Interacts with Mgtor and Cp190. Upon ecdysone stimulation, interacts with EcR, CTCF, su(Hw) and Trl. Post-translationally, isoform A and isoform C are autoproteolytically cleaved to yield Nup98 and Nup96 or Nup98 only, respectively. Expressed in brain.

Its subcellular location is the chromosome. It is found in the nucleus. The protein resides in the nucleoplasm. The protein localises to the nucleus membrane. It localises to the nuclear pore complex. Its function is as follows. Part of the nuclear pore complex (NPC). Required for MAD import as part of the Nup107-160 complex and required for nuclear export of Moe probably via its association with Rae1. Plays a role in nuclear mRNA export. Promotes cell antiviral response by up-regulating FoxK-dependent antiviral gene transcription. In germline stem cells, involved in their maintenance and division together with the TGF-Beta and EGFR signaling pathways. In larval lymph glands, has a role in the maintenance of hematopoiesis by regulating Pvr expression. Part of the nuclear pore complex (NPC). In the nucleoplasm, binds to transcriptionally active chromatin with a preference for regulatory regions; co-localizes with RNA polymerase II in a RNA-independent manner and before transition into transcription elongation. Plays a role in the transcriptional memory process by stabilizing enhancer-promoter loops and by mediating anchoring of chromatin to the nuclear pore complex region. During larval development, interacts with trx and MBD-R2 and regulates transcription of developmental genes including ecdysone-responsive genes such as Eip74 and E23. In terms of biological role, part of the nuclear pore complex (NPC). The sequence is that of Nuclear pore complex protein Nup98-Nup96 from Drosophila melanogaster (Fruit fly).